We begin with the raw amino-acid sequence, 366 residues long: Chorismate synthase (366 aa).

Residues Arg-48 and Arg-54 each coordinate NADP(+). FMN-binding positions include 132 to 134 (RSS), 244 to 245 (NA), Gly-289, 304 to 308 (KPTSS), and Arg-330.

The protein belongs to the chorismate synthase family. In terms of assembly, homotetramer. It depends on FMNH2 as a cofactor.

The enzyme catalyses 5-O-(1-carboxyvinyl)-3-phosphoshikimate = chorismate + phosphate. The protein operates within metabolic intermediate biosynthesis; chorismate biosynthesis; chorismate from D-erythrose 4-phosphate and phosphoenolpyruvate: step 7/7. Catalyzes the anti-1,4-elimination of the C-3 phosphate and the C-6 proR hydrogen from 5-enolpyruvylshikimate-3-phosphate (EPSP) to yield chorismate, which is the branch point compound that serves as the starting substrate for the three terminal pathways of aromatic amino acid biosynthesis. This reaction introduces a second double bond into the aromatic ring system. The chain is Chorismate synthase from Methylorubrum extorquens (strain PA1) (Methylobacterium extorquens).